The sequence spans 841 residues: Protein translocase subunit SecA (841 aa).

Residues 79-80, Q85, 103-107, and D492 contribute to the ATP site; these read MF and GEGKT. Positions 786–813 are disordered; sequence REEVVQGQTTAHQPQEGDDNKKAKKAPV. Zn(2+) is bound by residues C825, C827, C836, and C837.

Belongs to the SecA family. Part of the essential Sec protein translocation apparatus which comprises SecA, SecYEG and auxiliary proteins SecDF. Other proteins may be involved. Monomer and many different homodimers can be isolated, some of which are not formed in the presence of a synthetic signal peptide. A single SecA monomer interacts with SecY in the channel. Only shows some colocalization with FloA or FloT membrane assemblies. It depends on Zn(2+) as a cofactor.

Its subcellular location is the cell membrane. It is found in the cytoplasm. The protein resides in the membrane raft. It carries out the reaction ATP + H2O + cellular proteinSide 1 = ADP + phosphate + cellular proteinSide 2.. Its function is as follows. Part of the Sec protein translocase complex. Interacts with the SecYEG preprotein conducting channel. Has a central role in coupling the hydrolysis of ATP to the transfer of proteins into and across the cell membrane, serving as an ATP-driven molecular motor driving the stepwise translocation of polypeptide chains across the membrane. The chain is Protein translocase subunit SecA from Bacillus subtilis (strain 168).